A 935-amino-acid polypeptide reads, in one-letter code: Protein translocase subunit SecA (935 aa).

Residues Q86, 104–108 (GEGKT), and D494 contribute to the ATP site. The disordered stretch occupies residues 879–935 (EQAATARAQQHSSAAVAAPEQGATQRGAFGQRVSAADDAAPANRAERRAQKKPTKRH).

Belongs to the SecA family. Monomer and homodimer. Part of the essential Sec protein translocation apparatus which comprises SecA, SecYEG and auxiliary proteins SecDF. Other proteins may also be involved.

It localises to the cell membrane. The protein resides in the cytoplasm. The catalysed reaction is ATP + H2O + cellular proteinSide 1 = ADP + phosphate + cellular proteinSide 2.. Its function is as follows. Part of the Sec protein translocase complex. Interacts with the SecYEG preprotein conducting channel. Has a central role in coupling the hydrolysis of ATP to the transfer of proteins into and across the cell membrane, serving as an ATP-driven molecular motor driving the stepwise translocation of polypeptide chains across the membrane. This is Protein translocase subunit SecA from Leifsonia xyli subsp. xyli (strain CTCB07).